We begin with the raw amino-acid sequence, 277 residues long: Coiled-coil domain-containing protein 117 (277 aa).

The tract at residues 22–69 (SPPAFAGRAFPPGAAGHDLAPRPGVRGPPSSPDGRTARGRVSIHCRKK) is disordered. The span at 23–55 (PPAFAGRAFPPGAAGHDLAPRPGVRGPPSSPDG) shows a compositional bias: low complexity. Arg-47 carries the post-translational modification Omega-N-methylarginine. The residue at position 52 (Ser-52) is a Phosphoserine. The segment covering 58–69 (ARGRVSIHCRKK) has biased composition (basic residues). Residues 139–166 (QCEVARRRLQEIEDRIIDEDEEVESDRN) adopt a coiled-coil conformation. 2 disordered regions span residues 216–242 (LSEK…ATGT) and 255–277 (QCTD…EMEL). Polar residues predominate over residues 225-242 (NPKNYMGESQTKHTATGT).

As to quaternary structure, interacts with CIAO2B; the interaction is direct. Interacts with MMS19; the interaction is indirect.

The protein resides in the cytoplasm. Its subcellular location is the cytoskeleton. It localises to the spindle. The protein localises to the nucleus. Facilitates DNA repair, cell cycle progression, and cell proliferation through its interaction with CIAO2B. In Rattus norvegicus (Rat), this protein is Coiled-coil domain-containing protein 117.